A 227-amino-acid chain; its full sequence is Phosphoribosylformylglycinamidine synthase subunit PurQ (227 aa).

The Glutamine amidotransferase type-1 domain occupies 3–227 (FAVIVFPGSN…NWRESHVTAS (225 aa)). Cys86 acts as the Nucleophile in catalysis. Residues His194 and Glu196 contribute to the active site.

Part of the FGAM synthase complex composed of 1 PurL, 1 PurQ and 2 PurS subunits.

It localises to the cytoplasm. It carries out the reaction N(2)-formyl-N(1)-(5-phospho-beta-D-ribosyl)glycinamide + L-glutamine + ATP + H2O = 2-formamido-N(1)-(5-O-phospho-beta-D-ribosyl)acetamidine + L-glutamate + ADP + phosphate + H(+). It catalyses the reaction L-glutamine + H2O = L-glutamate + NH4(+). The protein operates within purine metabolism; IMP biosynthesis via de novo pathway; 5-amino-1-(5-phospho-D-ribosyl)imidazole from N(2)-formyl-N(1)-(5-phospho-D-ribosyl)glycinamide: step 1/2. In terms of biological role, part of the phosphoribosylformylglycinamidine synthase complex involved in the purines biosynthetic pathway. Catalyzes the ATP-dependent conversion of formylglycinamide ribonucleotide (FGAR) and glutamine to yield formylglycinamidine ribonucleotide (FGAM) and glutamate. The FGAM synthase complex is composed of three subunits. PurQ produces an ammonia molecule by converting glutamine to glutamate. PurL transfers the ammonia molecule to FGAR to form FGAM in an ATP-dependent manner. PurS interacts with PurQ and PurL and is thought to assist in the transfer of the ammonia molecule from PurQ to PurL. The protein is Phosphoribosylformylglycinamidine synthase subunit PurQ of Shouchella clausii (strain KSM-K16) (Alkalihalobacillus clausii).